The sequence spans 378 residues: Erythronate-4-phosphate dehydrogenase (378 aa).

Residues Ser45 and Thr66 each contribute to the substrate site. NAD(+)-binding residues include Asp146 and Thr175. Arg208 is a catalytic residue. NAD(+) is bound at residue Asp232. Residue Glu237 is part of the active site. His254 (proton donor) is an active-site residue. Gly257 contacts NAD(+). Substrate is bound at residue Tyr258.

This sequence belongs to the D-isomer specific 2-hydroxyacid dehydrogenase family. PdxB subfamily. In terms of assembly, homodimer.

It localises to the cytoplasm. The catalysed reaction is 4-phospho-D-erythronate + NAD(+) = (R)-3-hydroxy-2-oxo-4-phosphooxybutanoate + NADH + H(+). It functions in the pathway cofactor biosynthesis; pyridoxine 5'-phosphate biosynthesis; pyridoxine 5'-phosphate from D-erythrose 4-phosphate: step 2/5. Catalyzes the oxidation of erythronate-4-phosphate to 3-hydroxy-2-oxo-4-phosphonooxybutanoate. The protein is Erythronate-4-phosphate dehydrogenase of Escherichia coli O7:K1 (strain IAI39 / ExPEC).